Here is a 146-residue protein sequence, read N- to C-terminus: Large ribosomal subunit protein uL13 (146 aa).

The protein belongs to the universal ribosomal protein uL13 family. As to quaternary structure, part of the 50S ribosomal subunit.

Its function is as follows. This protein is one of the early assembly proteins of the 50S ribosomal subunit, although it is not seen to bind rRNA by itself. It is important during the early stages of 50S assembly. The protein is Large ribosomal subunit protein uL13 of Mycoplasma genitalium (strain ATCC 33530 / DSM 19775 / NCTC 10195 / G37) (Mycoplasmoides genitalium).